We begin with the raw amino-acid sequence, 94 residues long: Putative pterin-4-alpha-carbinolamine dehydratase (94 aa).

Belongs to the pterin-4-alpha-carbinolamine dehydratase family.

The enzyme catalyses (4aS,6R)-4a-hydroxy-L-erythro-5,6,7,8-tetrahydrobiopterin = (6R)-L-erythro-6,7-dihydrobiopterin + H2O. This Mycobacterium sp. (strain JLS) protein is Putative pterin-4-alpha-carbinolamine dehydratase.